Here is a 279-residue protein sequence, read N- to C-terminus: ATP-dependent Clp protease proteolytic subunit-related protein 2, chloroplastic (279 aa).

The N-terminal 54 residues, 1–54 (MAVSFNTTLHQPSLSPSCSIKLYSGLKPQSASFLASGYQNLNKEFYGRVYKSLQ), are a transit peptide targeting the chloroplast.

It belongs to the peptidase S14 family. As to quaternary structure, component of the chloroplastic Clp protease core complex which consist of at least 16 proteins: CLPP4 (3 copies), CLPP5 (3 copies), CLPR4 (2 copies), ClpP1 (1 copy), CLPP6 (1 copy), CLPR2 (1 copy), CLPT1 (1 copy), CLPT2 (1 copy) and 3 copies of CLPP3 and/or CLPR1 and/or CLPR3. The core complex is organized in two heptameric rings, one containing CLPP3,4,5,6 in a 1:2:3:1 ratio and the other CLPP1 and CLPR1,2,3,4 in a 3:1:1:1:1 ratio. Expressed at least in leaves and roots.

The protein resides in the plastid. The protein localises to the chloroplast. Required for chloroplast development and integrity. Involved in the regulation of plastoglobules formation. In Arabidopsis thaliana (Mouse-ear cress), this protein is ATP-dependent Clp protease proteolytic subunit-related protein 2, chloroplastic.